Reading from the N-terminus, the 135-residue chain is VapC ribonuclease aq_1901 (135 aa).

The region spanning 3–130 is the PINc domain; sequence LLDTTVLLDF…FKKLGFKTVN (128 aa). A Mg(2+)-binding site is contributed by Asp-5.

The protein belongs to the PINc/VapC protein family. The cofactor is Mg(2+).

Its function is as follows. Toxic component of a type II toxin-antitoxin (TA) system. An RNase. The protein is VapC ribonuclease aq_1901 of Aquifex aeolicus (strain VF5).